We begin with the raw amino-acid sequence, 151 residues long: Cytochrome c-type biogenesis protein CcmE (151 aa).

The Cytoplasmic portion of the chain corresponds to 1-9; sequence MKGLKKKRR. Residues 10 to 30 traverse the membrane as a helical; Signal-anchor for type II membrane protein segment; that stretch reads IQIITLAFVALAGSTALIGYA. The Periplasmic portion of the chain corresponds to 31–151; the sequence is MRDGINFFRS…FQHTEDQPQG (121 aa). Residues H123 and Y127 each contribute to the heme site.

The protein belongs to the CcmE/CycJ family.

The protein resides in the cell inner membrane. Functionally, heme chaperone required for the biogenesis of c-type cytochromes. Transiently binds heme delivered by CcmC and transfers the heme to apo-cytochromes in a process facilitated by CcmF and CcmH. The chain is Cytochrome c-type biogenesis protein CcmE from Cereibacter sphaeroides (strain ATCC 17025 / ATH 2.4.3) (Rhodobacter sphaeroides).